A 418-amino-acid chain; its full sequence is Nucleoredoxin (418 aa).

Positions 109-309 (KYKVTSIPSL…ESNAVQLHEG (201 aa)) constitute a Thioredoxin domain.

This sequence belongs to the nucleoredoxin family.

It localises to the cytoplasm. It is found in the cytosol. Its subcellular location is the nucleus. It carries out the reaction [protein]-dithiol + NAD(+) = [protein]-disulfide + NADH + H(+). The enzyme catalyses [protein]-dithiol + NADP(+) = [protein]-disulfide + NADPH + H(+). In terms of biological role, functions as a redox-dependent negative regulator of the Wnt signaling pathway. This Danio rerio (Zebrafish) protein is Nucleoredoxin (nxn).